The chain runs to 527 residues: D-3-phosphoglycerate dehydrogenase (527 aa).

NAD(+) contacts are provided by residues 149-150 (RV), Asp-169, 228-230 (AAR), and Asp-254. Residue Arg-230 is part of the active site. Glu-259 is a catalytic residue. The active-site Proton donor is the His-278. 278–281 (HIAA) contacts NAD(+). The ACT domain maps to 453–527 (YIISLHEDKP…GIIDATYVEL (75 aa)).

It belongs to the D-isomer specific 2-hydroxyacid dehydrogenase family.

The enzyme catalyses (2R)-3-phosphoglycerate + NAD(+) = 3-phosphooxypyruvate + NADH + H(+). Its pathway is amino-acid biosynthesis; L-serine biosynthesis; L-serine from 3-phospho-D-glycerate: step 1/3. This is D-3-phosphoglycerate dehydrogenase (serA) from Archaeoglobus fulgidus (strain ATCC 49558 / DSM 4304 / JCM 9628 / NBRC 100126 / VC-16).